Here is a 158-residue protein sequence, read N- to C-terminus: Snaclec mucrocetin subunit alpha (158 aa).

The first 23 residues, 1–23, serve as a signal peptide directing secretion; it reads MGRFIFVSFGLLVVFLSLSGTGA. Intrachain disulfides connect Cys-27–Cys-38, Cys-55–Cys-152, and Cys-127–Cys-144. The C-type lectin domain occupies 34–153; sequence YDRYCYQAFS…CGRENPFVCK (120 aa).

Belongs to the snaclec family. In terms of assembly, tetramer of heterodimers of alpha and beta subunits (alphabeta)(4); disulfide-linked. As to expression, expressed by the venom gland.

Its subcellular location is the secreted. In terms of biological role, platelet-agglutinating factor that acts in a vWF-independent manner. Binds specifically to platelet GPIbalpha (GP1BA) to a distinct binding site from that of flavocetin-A. This is Snaclec mucrocetin subunit alpha from Protobothrops mucrosquamatus (Taiwan habu).